Consider the following 89-residue polypeptide: Large ribosomal subunit protein bL28 (89 aa).

It belongs to the bacterial ribosomal protein bL28 family.

In Chlamydia caviae (strain ATCC VR-813 / DSM 19441 / 03DC25 / GPIC) (Chlamydophila caviae), this protein is Large ribosomal subunit protein bL28.